We begin with the raw amino-acid sequence, 505 residues long: MADFVAAIDQGTTSTRCMIFDHDGAEVGRHQLEHEQILPKAGWVEHNPVEIWERTGSVLATALNATKLATTDLAALGITNQRETSLVWNRHTGRPYYNAIVWQDTRTDRIASALDRDGRGDVIRRKAGLPPATYFSGGKLQWLLENVDGLRADAANGDALFGTTDTWVLWNLTGGHRGGVHVTDVTNASRTMLMNLETLDWDDELLGFFDIPRQMLPEIRPSSSPQPYGVTVETGPADGEIPITGILGDQQAAMVGQVCLDVGEAKNTYGTGNFLLLNTGEKIVRSDNGLLTTVCYQFGDSKPVYALEGSIAVTGSAVQWLRDQLGIISGASQSESLARQVDDNGGVYFVPAFSGLFAPYWRSDARGAIVGLSRFNTNAHVARATLEAICYQSRDVVDAMAADSGVPLEVLKVDGGITANDLCMQIQADVLGVDVVKPVVAETTALGAAYAAGLAVGFWEGADDLRANWQEGRRWSPQWSDEQRAEGYAGWQKAVHRTLDWVDVE.

Thr12 serves as a coordination point for ADP. The ATP site is built by Thr12, Thr13, and Ser14. Thr12 is a binding site for sn-glycerol 3-phosphate. Arg16 is a binding site for ADP. Sn-glycerol 3-phosphate-binding residues include Arg82, Glu83, Tyr134, and Asp249. 5 residues coordinate glycerol: Arg82, Glu83, Tyr134, Asp249, and Gln250. 2 residues coordinate ADP: Thr271 and Gly315. The ATP site is built by Thr271, Gly315, Gln319, and Gly416. ADP contacts are provided by Gly416 and Asn420.

This sequence belongs to the FGGY kinase family.

The catalysed reaction is glycerol + ATP = sn-glycerol 3-phosphate + ADP + H(+). Its pathway is polyol metabolism; glycerol degradation via glycerol kinase pathway; sn-glycerol 3-phosphate from glycerol: step 1/1. Its activity is regulated as follows. Inhibited by fructose 1,6-bisphosphate (FBP). In terms of biological role, key enzyme in the regulation of glycerol uptake and metabolism. Catalyzes the phosphorylation of glycerol to yield sn-glycerol 3-phosphate. The sequence is that of Glycerol kinase from Mycolicibacterium gilvum (strain PYR-GCK) (Mycobacterium gilvum (strain PYR-GCK)).